The sequence spans 94 residues: Small ribosomal subunit protein uS19 (94 aa).

This sequence belongs to the universal ribosomal protein uS19 family.

In terms of biological role, protein S19 forms a complex with S13 that binds strongly to the 16S ribosomal RNA. The protein is Small ribosomal subunit protein uS19 of Elusimicrobium minutum (strain Pei191).